The following is a 447-amino-acid chain: Sporulation protein YpeB (447 aa).

Belongs to the YpeB family.

Functionally, required for spore cortex hydrolysis during germination. Appears to be required for either expression, localization, activation or function of SleB. In Halalkalibacterium halodurans (strain ATCC BAA-125 / DSM 18197 / FERM 7344 / JCM 9153 / C-125) (Bacillus halodurans), this protein is Sporulation protein YpeB.